A 314-amino-acid polypeptide reads, in one-letter code: Deoxymugineic acid synthase 1-D (314 aa).

The segment at 1–21 is disordered; that stretch reads MGAGEKTAAGMPRIGMGTAVQ. Residue Asp-44 participates in NADP(+) binding. Tyr-49 functions as the Proton donor in the catalytic mechanism. His-112 is a binding site for substrate. NADP(+) is bound by residues 158–159, Gln-180, 258–266, and 273–281; these read AN, FDEARMREN, and ELTEEERLR.

It belongs to the aldo/keto reductase family. Mostly expressed in root tissues, observed, at low levels, in mesocotyl and embryonic roots, seedling roots, crown and seedling leafes, mature bracts, anthers, pistil, caryopsis and embryos.

The catalysed reaction is 2'-deoxymugineate + NAD(+) = 3''-deamino-3''-oxonicotianamine + NADH + H(+). It carries out the reaction 2'-deoxymugineate + NADP(+) = 3''-deamino-3''-oxonicotianamine + NADPH + H(+). It participates in siderophore biosynthesis. In terms of biological role, catalyzes the reduction of a 3''-keto intermediate during the biosynthesis of 2'-deoxymugineic acid (DMA) from L-Met. Involved in the formation of phytosiderophores (MAs) belonging to the mugineic acid family and required to acquire iron. This chain is Deoxymugineic acid synthase 1-D, found in Triticum aestivum (Wheat).